Reading from the N-terminus, the 435-residue chain is NADH-quinone oxidoreductase subunit D 2 (435 aa).

This sequence belongs to the complex I 49 kDa subunit family. In terms of assembly, NDH-1 is composed of 14 different subunits. Subunits NuoB, C, D, E, F, and G constitute the peripheral sector of the complex.

It is found in the cell inner membrane. It carries out the reaction a quinone + NADH + 5 H(+)(in) = a quinol + NAD(+) + 4 H(+)(out). NDH-1 shuttles electrons from NADH, via FMN and iron-sulfur (Fe-S) centers, to quinones in the respiratory chain. The immediate electron acceptor for the enzyme in this species is believed to be ubiquinone. Couples the redox reaction to proton translocation (for every two electrons transferred, four hydrogen ions are translocated across the cytoplasmic membrane), and thus conserves the redox energy in a proton gradient. This Stenotrophomonas maltophilia (strain R551-3) protein is NADH-quinone oxidoreductase subunit D 2.